Reading from the N-terminus, the 362-residue chain is 3-dehydroquinate synthase (362 aa).

The protein belongs to the archaeal-type DHQ synthase family.

It catalyses the reaction 2-amino-2,3,7-trideoxy-D-lyxo-hept-6-ulosonate + NAD(+) + H2O = 3-dehydroquinate + NH4(+) + NADH + H(+). Its function is as follows. Catalyzes the oxidative deamination and cyclization of 2-amino-3,7-dideoxy-D-threo-hept-6-ulosonic acid (ADH) to yield 3-dehydroquinate (DHQ), which is fed into the canonical shikimic pathway of aromatic amino acid biosynthesis. This Methanococcus aeolicus (strain ATCC BAA-1280 / DSM 17508 / OCM 812 / Nankai-3) protein is 3-dehydroquinate synthase.